Reading from the N-terminus, the 449-residue chain is Deoxyguanosinetriphosphate triphosphohydrolase-like protein (449 aa).

The interval 1–27 (MTSSVWQERRHGEDKQRRNDHRSPYQR) is disordered. Residues 7 to 27 (QERRHGEDKQRRNDHRSPYQR) are compositionally biased toward basic and acidic residues. Positions 59–255 (RLTHSLEVSQ…MELADDIAYA (197 aa)) constitute an HD domain.

Belongs to the dGTPase family. Type 2 subfamily.

The protein is Deoxyguanosinetriphosphate triphosphohydrolase-like protein of Shewanella baltica (strain OS223).